Reading from the N-terminus, the 462-residue chain is L-seryl-tRNA(Sec) selenium transferase (462 aa).

Lys292 carries the N6-(pyridoxal phosphate)lysine modification.

Belongs to the SelA family. The cofactor is pyridoxal 5'-phosphate.

Its subcellular location is the cytoplasm. It carries out the reaction L-seryl-tRNA(Sec) + selenophosphate + H(+) = L-selenocysteinyl-tRNA(Sec) + phosphate. It participates in aminoacyl-tRNA biosynthesis; selenocysteinyl-tRNA(Sec) biosynthesis; selenocysteinyl-tRNA(Sec) from L-seryl-tRNA(Sec) (bacterial route): step 1/1. Converts seryl-tRNA(Sec) to selenocysteinyl-tRNA(Sec) required for selenoprotein biosynthesis. In Geotalea uraniireducens (strain Rf4) (Geobacter uraniireducens), this protein is L-seryl-tRNA(Sec) selenium transferase.